We begin with the raw amino-acid sequence, 189 residues long: CASP-like protein 1F2 (189 aa).

Over 1–27 the chain is Cytoplasmic; sequence MESLEVANGKSSALGVSREASSPPQMG. The chain crosses the membrane as a helical span at residues 28–48; that stretch reads FFIAQVVLRFFTLAFTGAAIA. Over 49–77 the chain is Extracellular; it reads VMVTAKETVEVFSISFTVRYSYLSAFKFL. The helical transmembrane segment at 78–98 threads the bilayer; the sequence is VGADAVVCGFSMLSLIFVSIF. Residues 99 to 113 are Cytoplasmic-facing; it reads NKGKSNHYFFLYFHD. Residues 114–134 form a helical membrane-spanning segment; it reads LILMVLSMSACAAATAVGYVG. Residues 135–156 are Extracellular-facing; that stretch reads RYGQDKAAWMAVCGNVKMFCDK. A helical transmembrane segment spans residues 157–177; sequence ALASILLSLIGFICLFLLTIM. The Cytoplasmic portion of the chain corresponds to 178–189; that stretch reads AARNLRVSGHLI.

The protein belongs to the Casparian strip membrane proteins (CASP) family. In terms of assembly, homodimer and heterodimers.

The protein localises to the cell membrane. This Vitis vinifera (Grape) protein is CASP-like protein 1F2.